The sequence spans 495 residues: L-arabinose isomerase (495 aa).

Residues Glu-305, Glu-332, His-349, and His-448 each contribute to the Mn(2+) site.

It belongs to the arabinose isomerase family. Requires Mn(2+) as cofactor.

The catalysed reaction is beta-L-arabinopyranose = L-ribulose. Its pathway is carbohydrate degradation; L-arabinose degradation via L-ribulose; D-xylulose 5-phosphate from L-arabinose (bacterial route): step 1/3. In terms of biological role, catalyzes the conversion of L-arabinose to L-ribulose. The polypeptide is L-arabinose isomerase (Mannheimia succiniciproducens (strain KCTC 0769BP / MBEL55E)).